The chain runs to 202 residues: GTP-binding protein rho1 (202 aa).

13 to 20 is a GTP binding site; the sequence is GDGACGKT. The Effector region motif lies at 35–43; that stretch reads YVPTVFENY. Residues 60 to 64 and 118 to 121 contribute to the GTP site; these read DTAGQ and CKAD. Position 199 is a cysteine methyl ester (Cys199). A lipid anchor (S-geranylgeranyl cysteine) is attached at Cys199. A propeptide spans 200–202 (removed in mature form); sequence ILL.

This sequence belongs to the small GTPase superfamily. Rho family.

It localises to the cell membrane. Involved in the regulation of cell wall growth and actin cytoskeleton organization. Activates (1,3)-beta-D-glucan synthase. This chain is GTP-binding protein rho1 (rho1), found in Schizosaccharomyces pombe (strain 972 / ATCC 24843) (Fission yeast).